We begin with the raw amino-acid sequence, 201 residues long: Small ribosomal subunit protein uS4c (201 aa).

The tract at residues 20–39 is disordered; it reads GLTRKTPKSGSNLKKKFHSG. Residues 89 to 150 enclose the S4 RNA-binding domain; it reads MRLDNILFRL…NQRSKRLVQN (62 aa).

Belongs to the universal ribosomal protein uS4 family. Part of the 30S ribosomal subunit. Contacts protein S5. The interaction surface between S4 and S5 is involved in control of translational fidelity.

Its subcellular location is the plastid. The protein resides in the chloroplast. Its function is as follows. One of the primary rRNA binding proteins, it binds directly to 16S rRNA where it nucleates assembly of the body of the 30S subunit. In terms of biological role, with S5 and S12 plays an important role in translational accuracy. This is Small ribosomal subunit protein uS4c (rps4) from Oryza nivara (Indian wild rice).